The sequence spans 232 residues: Flagellar L-ring protein (232 aa).

A signal peptide spans 1-21 (MQKYALHAYPVMALMVATLTG). Cys-22 carries the N-palmitoyl cysteine lipid modification. Cys-22 is lipidated: S-diacylglycerol cysteine.

Belongs to the FlgH family. As to quaternary structure, the basal body constitutes a major portion of the flagellar organelle and consists of four rings (L,P,S, and M) mounted on a central rod.

It localises to the cell outer membrane. Its subcellular location is the bacterial flagellum basal body. Assembles around the rod to form the L-ring and probably protects the motor/basal body from shearing forces during rotation. This Salmonella gallinarum (strain 287/91 / NCTC 13346) protein is Flagellar L-ring protein.